We begin with the raw amino-acid sequence, 434 residues long: D-amino acid dehydrogenase (434 aa).

Position 3–17 (3–17 (VIVLGSGVIGTTTAY)) interacts with FAD.

The protein belongs to the DadA oxidoreductase family. FAD serves as cofactor.

The catalysed reaction is a D-alpha-amino acid + A + H2O = a 2-oxocarboxylate + AH2 + NH4(+). Oxidative deamination of D-amino acids. The chain is D-amino acid dehydrogenase from Bordetella bronchiseptica (strain ATCC BAA-588 / NCTC 13252 / RB50) (Alcaligenes bronchisepticus).